The primary structure comprises 182 residues: Malignant T-cell-amplified sequence 1 homolog (182 aa).

The PUA domain occupies 93–172; the sequence is VTMQQVDKGA…IGIETYHFLN (80 aa).

It belongs to the MCTS1 family. As to quaternary structure, interacts with DENR.

It is found in the cytoplasm. Regulates translation as part of a complex with DENR. Specifically required for translational re-initiation in mRNAs containing upstream open reading frames (uORFs). Not required for standard translational initiation. Regulates expression of a subset of gene products including mbc, InR and EcR. This Drosophila melanogaster (Fruit fly) protein is Malignant T-cell-amplified sequence 1 homolog.